Reading from the N-terminus, the 118-residue chain is Large ribosomal subunit protein uL18 (118 aa).

Belongs to the universal ribosomal protein uL18 family. In terms of assembly, part of the 50S ribosomal subunit; part of the 5S rRNA/L5/L18/L25 subcomplex. Contacts the 5S and 23S rRNAs.

In terms of biological role, this is one of the proteins that bind and probably mediate the attachment of the 5S RNA into the large ribosomal subunit, where it forms part of the central protuberance. This Rickettsia typhi (strain ATCC VR-144 / Wilmington) protein is Large ribosomal subunit protein uL18.